A 628-amino-acid polypeptide reads, in one-letter code: Nucleoside-triphosphatase 1 (628 aa).

An N-terminal signal peptide occupies residues 1–25 (MWLPVYVPLLLVFGVSLSLPQGSLG). The Proton acceptor role is filled by Glu236. A glycan (N-linked (GlcNAc...) asparagine) is linked at Asn432.

This sequence belongs to the GDA1/CD39 NTPase family. In terms of assembly, homotetramer.

The protein localises to the secreted. The protein resides in the parasitophorous vacuole. The enzyme catalyses a ribonucleoside 5'-triphosphate + H2O = a ribonucleoside 5'-diphosphate + phosphate + H(+). Its function is as follows. May perform an important processing step in the conversion of high energy nucleotides prior to uptake by the parasite and may contribute to intracellular survival and virulence. NTPAse-I has a specific activity 4.5-fold higher than NTPAse-II in hydrolysis of ATP. The primary difference between these isozymes lies in their ability to hydrolyze nucleoside triphosphate versus diphosphate substrates. While NTPAse-II hydrolyzes ATP to ADP and ADP to AMP at almost the same rate, NTPAse-I hydrolyzes ADP to AMP at a much slower rate (0.7% of the rate for ATP). The sequence is that of Nucleoside-triphosphatase 1 (NTP3) from Toxoplasma gondii.